A 142-amino-acid chain; its full sequence is Large ribosomal subunit protein uL13 (142 aa).

This sequence belongs to the universal ribosomal protein uL13 family. As to quaternary structure, part of the 50S ribosomal subunit.

In terms of biological role, this protein is one of the early assembly proteins of the 50S ribosomal subunit, although it is not seen to bind rRNA by itself. It is important during the early stages of 50S assembly. The sequence is that of Large ribosomal subunit protein uL13 from Pseudomonas paraeruginosa (strain DSM 24068 / PA7) (Pseudomonas aeruginosa (strain PA7)).